Consider the following 56-residue polypeptide: Small ribosomal subunit protein uS14z/uS14y/uS14x (56 aa).

Residues C21, C24, C39, and C42 each contribute to the Zn(2+) site.

This sequence belongs to the universal ribosomal protein uS14 family. Zn(2+) is required as a cofactor.

This is Small ribosomal subunit protein uS14z/uS14y/uS14x (RPS29A) from Arabidopsis thaliana (Mouse-ear cress).